We begin with the raw amino-acid sequence, 325 residues long: Cell wall mannoprotein PIR3 (325 aa).

A signal peptide spans 1-18 (MQYKKPLVVSALAATSLA). Positions 19–67 (AYAPKDPWSTLTPSATYKGGITDYSSSFGIAIEAVATSASSVASSKAKR) are excised as a propeptide. 8 PIR1/2/3 repeats span residues 68-91 (AASQIGDGQVQAATTTAAVSKKST), 92-109 (AAAVSQITDGQVQAAKST), 110-127 (AAAVSQITDGQVQAAKST), 128-145 (AAAVSQITDGQVQAAKST), 146-163 (AAAVSQITDGQVQAAKST), 164-181 (AAAASQISDGQVQATTST), 182-199 (KAAASQITDGQIQASKTT), and 200-217 (SGASQVSDGQVQATAEVK).

It belongs to the PIR protein family. Covalently linked to beta-1,3-glucan of the inner cell wall layer via an alkali-sensitive ester linkage between the gamma-carboxyl group of glutamic acids, arising from specific glutamines within the PIR1/2/3 repeats, and hydroxyl groups of glucoses of beta-1,3-glucan chains. In terms of processing, O-glycosylated. Extensively O-mannosylated.

The protein resides in the secreted. Its subcellular location is the cell wall. Functionally, component of the outer cell wall layer. Required for stability of the cell wall and for optimal growth. Required for resistance against several antifungal and cell wall-perturbing agents. This chain is Cell wall mannoprotein PIR3 (PIR3), found in Saccharomyces cerevisiae (strain ATCC 204508 / S288c) (Baker's yeast).